The chain runs to 192 residues: UPF0301 protein Bphyt_0868 (192 aa).

It belongs to the UPF0301 (AlgH) family.

This Paraburkholderia phytofirmans (strain DSM 17436 / LMG 22146 / PsJN) (Burkholderia phytofirmans) protein is UPF0301 protein Bphyt_0868.